The primary structure comprises 134 residues: Profilin-3 (134 aa).

Cysteines 13 and 118 form a disulfide. The short motif at 84-100 (AVIRGKKGSGGITIKKT) is the Involved in PIP2 interaction element. Position 114 is a phosphothreonine (Thr114).

It belongs to the profilin family. As to quaternary structure, occurs in many kinds of cells as a complex with monomeric actin in a 1:1 ratio. Phosphorylated by MAP kinases.

Its subcellular location is the cytoplasm. The protein resides in the cytoskeleton. Binds to actin and affects the structure of the cytoskeleton. At high concentrations, profilin prevents the polymerization of actin, whereas it enhances it at low concentrations. The chain is Profilin-3 from Olea europaea (Common olive).